A 571-amino-acid chain; its full sequence is Apolipoprotein N-acyltransferase (571 aa).

The next 6 helical transmembrane spans lie at 13–33 (VVLW…IALV), 51–68 (LYAA…GLRY), 72–92 (LMFL…VLFI), 118–138 (LVAA…FTGI), 152–172 (MLIQ…IVCV), and 199–219 (LVTA…SMNA). In terms of domain architecture, CN hydrolase spans 234–527 (NELTVYEQDI…SDVIYAQPRR (294 aa)). Glu275 acts as the Proton acceptor in catalysis. Lys380 is a catalytic residue. The active-site Nucleophile is Cys430. Residues 542–562 (AGLMGAATLCGLAWMTFEWLM) form a helical membrane-spanning segment.

This sequence belongs to the CN hydrolase family. Apolipoprotein N-acyltransferase subfamily.

The protein localises to the cell inner membrane. The catalysed reaction is N-terminal S-1,2-diacyl-sn-glyceryl-L-cysteinyl-[lipoprotein] + a glycerophospholipid = N-acyl-S-1,2-diacyl-sn-glyceryl-L-cysteinyl-[lipoprotein] + a 2-acyl-sn-glycero-3-phospholipid + H(+). Its pathway is protein modification; lipoprotein biosynthesis (N-acyl transfer). In terms of biological role, catalyzes the phospholipid dependent N-acylation of the N-terminal cysteine of apolipoprotein, the last step in lipoprotein maturation. The chain is Apolipoprotein N-acyltransferase from Rhodopirellula baltica (strain DSM 10527 / NCIMB 13988 / SH1).